A 322-amino-acid polypeptide reads, in one-letter code: CPX chromosomal region candidate gene 1 protein homolog (322 aa).

Composition is skewed to polar residues over residues 1-23 (MTSS…NETP) and 37-78 (TNIS…TQND). Residues 1–83 (MTSSNQGNDP…MTQNDPPDEE (83 aa)) are disordered.

In Mus musculus (Mouse), this protein is CPX chromosomal region candidate gene 1 protein homolog (Cpxcr1).